A 182-amino-acid polypeptide reads, in one-letter code: Large ribosomal subunit protein uL10 (182 aa).

Belongs to the universal ribosomal protein uL10 family. In terms of assembly, part of the ribosomal stalk of the 50S ribosomal subunit. The N-terminus interacts with L11 and the large rRNA to form the base of the stalk. The C-terminus forms an elongated spine to which L12 dimers bind in a sequential fashion forming a multimeric L10(L12)X complex.

Functionally, forms part of the ribosomal stalk, playing a central role in the interaction of the ribosome with GTP-bound translation factors. In Parafrankia sp. (strain EAN1pec), this protein is Large ribosomal subunit protein uL10.